Consider the following 235-residue polypeptide: Purine nucleoside phosphorylase DeoD-type (235 aa).

His-4 contacts a purine D-ribonucleoside. Phosphate-binding positions include Gly-20, Arg-24, Arg-43, and 87 to 90; that span reads RVGT. Residues 178 to 180 and 202 to 203 each bind a purine D-ribonucleoside; these read EME and SD. The active-site Proton donor is the Asp-203.

It belongs to the PNP/UDP phosphorylase family. In terms of assembly, homohexamer; trimer of homodimers.

The catalysed reaction is a purine D-ribonucleoside + phosphate = a purine nucleobase + alpha-D-ribose 1-phosphate. It catalyses the reaction a purine 2'-deoxy-D-ribonucleoside + phosphate = a purine nucleobase + 2-deoxy-alpha-D-ribose 1-phosphate. Its function is as follows. Catalyzes the reversible phosphorolytic breakdown of the N-glycosidic bond in the beta-(deoxy)ribonucleoside molecules, with the formation of the corresponding free purine bases and pentose-1-phosphate. In Geobacillus sp. (strain WCH70), this protein is Purine nucleoside phosphorylase DeoD-type.